The sequence spans 192 residues: Aminodeoxychorismate synthase component 2 (192 aa).

A Glutamine amidotransferase type-1 domain is found at 3 to 192; that stretch reads SVLMIDNCDS…LANLIHRPCH (190 aa). Catalysis depends on residues cysteine 83, histidine 170, and glutamate 172.

As to quaternary structure, monomer. Heterodimer consisting of two non-identical subunits: a glutamine amidotransferase subunit (PabA) and a aminodeoxychorismate synthase subunit (PabB).

The catalysed reaction is chorismate + L-glutamine = 4-amino-4-deoxychorismate + L-glutamate. The protein operates within cofactor biosynthesis; tetrahydrofolate biosynthesis; 4-aminobenzoate from chorismate: step 1/2. Part of a heterodimeric complex that catalyzes the two-step biosynthesis of 4-amino-4-deoxychorismate (ADC), a precursor of p-aminobenzoate (PABA) and tetrahydrofolate. In the first step, a glutamine amidotransferase (PabA) generates ammonia as a substrate that, along with chorismate, is used in the second step, catalyzed by aminodeoxychorismate synthase (PabB) to produce ADC. PabA converts glutamine into glutamate only in the presence of stoichiometric amounts of PabB. This chain is Aminodeoxychorismate synthase component 2, found in Streptomyces lividans.